Consider the following 549-residue polypeptide: CTP synthase (549 aa).

Residues Met1–Leu270 form an amidoligase domain region. Ser13 serves as a coordination point for CTP. Residue Ser13 participates in UTP binding. ATP contacts are provided by residues Ser14–Ile19 and Asp71. Positions 71 and 144 each coordinate Mg(2+). Residues Asp151–Glu153, Lys191–Gln196, and Lys227 each bind CTP. UTP contacts are provided by residues Lys191–Gln196 and Lys227. The Glutamine amidotransferase type-1 domain maps to Thr295 to Gln547. Residue Gly356 participates in L-glutamine binding. Cys383 (nucleophile; for glutamine hydrolysis) is an active-site residue. L-glutamine is bound by residues Leu384–Gln387, Glu407, and Arg473. Residues His520 and Glu522 contribute to the active site.

The protein belongs to the CTP synthase family. As to quaternary structure, homotetramer.

It carries out the reaction UTP + L-glutamine + ATP + H2O = CTP + L-glutamate + ADP + phosphate + 2 H(+). The catalysed reaction is L-glutamine + H2O = L-glutamate + NH4(+). It catalyses the reaction UTP + NH4(+) + ATP = CTP + ADP + phosphate + 2 H(+). It participates in pyrimidine metabolism; CTP biosynthesis via de novo pathway; CTP from UDP: step 2/2. Allosterically activated by GTP, when glutamine is the substrate; GTP has no effect on the reaction when ammonia is the substrate. The allosteric effector GTP functions by stabilizing the protein conformation that binds the tetrahedral intermediate(s) formed during glutamine hydrolysis. Inhibited by the product CTP, via allosteric rather than competitive inhibition. Catalyzes the ATP-dependent amination of UTP to CTP with either L-glutamine or ammonia as the source of nitrogen. Regulates intracellular CTP levels through interactions with the four ribonucleotide triphosphates. This chain is CTP synthase, found in Cupriavidus metallidurans (strain ATCC 43123 / DSM 2839 / NBRC 102507 / CH34) (Ralstonia metallidurans).